The following is a 199-amino-acid chain: dITP/XTP pyrophosphatase (199 aa).

8–13 serves as a coordination point for substrate; it reads SGNAGK. The active-site Proton acceptor is the D69. D69 is a Mg(2+) binding site. Residues S70, 154–157, K177, and 182–183 contribute to the substrate site; these read FGYN and HR.

Belongs to the HAM1 NTPase family. As to quaternary structure, homodimer. The cofactor is Mg(2+).

The enzyme catalyses XTP + H2O = XMP + diphosphate + H(+). It catalyses the reaction dITP + H2O = dIMP + diphosphate + H(+). It carries out the reaction ITP + H2O = IMP + diphosphate + H(+). Functionally, pyrophosphatase that catalyzes the hydrolysis of nucleoside triphosphates to their monophosphate derivatives, with a high preference for the non-canonical purine nucleotides XTP (xanthosine triphosphate), dITP (deoxyinosine triphosphate) and ITP. Seems to function as a house-cleaning enzyme that removes non-canonical purine nucleotides from the nucleotide pool, thus preventing their incorporation into DNA/RNA and avoiding chromosomal lesions. The polypeptide is dITP/XTP pyrophosphatase (Xylella fastidiosa (strain 9a5c)).